We begin with the raw amino-acid sequence, 339 residues long: Large ribosomal subunit protein uL29 (339 aa).

The interval 1–96 (MNDLTKKSVE…FAKQRKAKIE (96 aa)) is large ribosomal subunit protein uL29. The segment at 97–339 (QMMAEQQAAE…KTTKKGTGKK (243 aa)) is unknown. Disordered regions lie at residues 129–254 (VVST…VPTK) and 311–339 (KENR…TGKK). Over residues 145-156 (APVAAKKPAAAK) the composition is skewed to low complexity. A compositionally biased stretch (basic and acidic residues) spans 157 to 170 (DFPKQKDVVEEKTA). The segment covering 171–182 (TGKPAAPSAKKA) has biased composition (low complexity). The span at 185–210 (AKKDVAQETKTDKDAALKALIKEKAA) shows a compositional bias: basic and acidic residues. The segment covering 217 to 238 (KSKTSTPSGKTTVTVKSVTSAK) has biased composition (low complexity). Residues 239 to 248 (ADIEVPKETS) are compositionally biased toward basic and acidic residues.

This sequence belongs to the universal ribosomal protein uL29 family. In terms of assembly, forms homomultimers. Part of the ribosome; radioactive IRS binds to purified ribosomes.

In terms of biological role, specifically binds a DNA inverted repeat sequence (IRS) found downstream of rpsB in one of the ribosomal subunit operons (for genes rpsB, tsf, and unknown gene x). Might be involved in regulation of transcription of the rpsB operon; the IRS may be a control element to attenuate transcription. The chain is Large ribosomal subunit protein uL29 from Spiroplasma citri.